Consider the following 91-residue polypeptide: Uteroglobin (91 aa).

The signal sequence occupies residues Met-1 to Ala-21.

The protein belongs to the secretoglobin family. In terms of assembly, antiparallel homodimer; disulfide-linked. Interaction with LMBR1L is controversial. Club cells (nonciliated cells of the surface epithelium of the pulmonary airways). Expressed in lung, uterus, and prostate.

The protein resides in the secreted. Its function is as follows. Binds phosphatidylcholine, phosphatidylinositol, polychlorinated biphenyls (PCB) and weakly progesterone, potent inhibitor of phospholipase A2. The sequence is that of Uteroglobin (SCGB1A1) from Equus caballus (Horse).